The sequence spans 70 residues: MGKNNSGSRNEVLVRGAEQALDQMKYEIAQEFGVQLGADTTARSNGSVGGEITKRLVAMAEQQLGGRANR.

The protein belongs to the alpha/beta-type SASP family.

Functionally, SASP are bound to spore DNA. They are double-stranded DNA-binding proteins that cause DNA to change to an a-like conformation. They protect the DNA backbone from chemical and enzymatic cleavage and are thus involved in dormant spore's high resistance to UV light. The protein is Small, acid-soluble spore protein 1 (sasP-1) of Bacillus cereus.